The primary structure comprises 801 residues: H(+)/Cl(-) exchange transporter 3 (801 aa).

The Cytoplasmic portion of the chain corresponds to 1-125 (MESEQLFHRG…WEMTKSLYDA (125 aa)). Short sequence motifs (di-leucine internalization motif; mediates targeting to late endosome and lysosome membranes) lie at residues 28–29 (LL), 46–47 (LL), and 71–75 (LLDLL). A helical transmembrane segment spans residues 126 to 163 (WSGWLVVTLTGLASGALAGLIDIAADWMTDLKEGICLS). Asn177 carries N-linked (GlcNAc...) asparagine glycosylation. A helical membrane pass occupies residues 209–232 (MNYIMYIFWALSFAFLAVSLVKVF). Positions 238-242 (GSGIP) match the Selectivity filter part_1 motif. Ser239 contacts chloride. The helical intramembrane region spans 241–248 (IPEIKTIL). Helical transmembrane passes span 258–276 (GKWT…VASG) and 282–301 (EGPL…YLFP). The Selectivity filter part_2 signature appears at 280–284 (GKEGP). Intramembrane regions (helical) lie at residues 313 to 325 (VLSA…VSVA) and 329 to 337 (PIGGVLFSL). 3 helical membrane-spanning segments follow: residues 349–367 (LWRS…RSIN), 391–416 (FPFI…AWCR), and 423–443 (FGKY…VIAF). Asn451 and Asn479 each carry an N-linked (GlcNAc...) asparagine glycan. The chain crosses the membrane as a helical span at residues 500-520 (IWQLCLALIFKIIMTVFTFGI). A Selectivity filter part_3 motif is present at residues 525-529 (GLFIP). Phe527 serves as a coordination point for chloride. 2 intramembrane regions (helical) span residues 555-569 (GLYA…LGGV) and 573-584 (TVSLVVIVFELT). The segment at residues 585–588 (GGLE) is an intramembrane region (note=Loop between two helices). Residues 589–607 (YIVPLMAAVMTSKWVGDAF) form a helical membrane-spanning segment. Residues 608–801 (GREGIYEAHI…NQDPASIMFN (194 aa)) lie on the Cytoplasmic side of the membrane. Tyr613 contacts chloride. 2 CBS domains span residues 641-705 (MRPR…ARKK) and 738-795 (LDMS…NQDP). ATP-binding positions include 672-674 (YNG) and 779-782 (TKKD).

This sequence belongs to the chloride channel (TC 2.A.49) family. ClC-3/CLCN3 subfamily. As to quaternary structure, monomer and homodimer. Forms heterodimers with CLCN4. N-glycosylated.

It is found in the early endosome membrane. Its subcellular location is the late endosome membrane. It localises to the lysosome membrane. The protein localises to the cell membrane. In terms of biological role, strongly outwardly rectifying, electrogenic H(+)/Cl(-)exchanger which mediates the exchange of chloride ions against protons. The CLC channel family contains both chloride channels and proton-coupled anion transporters that exchange chloride or another anion for protons. The presence of conserved gating glutamate residues is typical for family members that function as antiporters. This Pongo abelii (Sumatran orangutan) protein is H(+)/Cl(-) exchange transporter 3 (CLCN3).